Here is a 198-residue protein sequence, read N- to C-terminus: Ribonuclease HII (198 aa).

Residues 10 to 198 (HLVAGVDEVG…PVKRALGLVC (189 aa)) form the RNase H type-2 domain. D16, E17, and D108 together coordinate a divalent metal cation.

This sequence belongs to the RNase HII family. Mn(2+) serves as cofactor. The cofactor is Mg(2+).

The protein resides in the cytoplasm. It carries out the reaction Endonucleolytic cleavage to 5'-phosphomonoester.. Its function is as follows. Endonuclease that specifically degrades the RNA of RNA-DNA hybrids. This is Ribonuclease HII from Enterobacter sp. (strain 638).